The primary structure comprises 449 residues: Glucose-6-phosphate isomerase (449 aa).

The Proton donor role is filled by Glu291. Catalysis depends on residues His312 and Lys426.

Belongs to the GPI family.

Its subcellular location is the cytoplasm. The catalysed reaction is alpha-D-glucose 6-phosphate = beta-D-fructose 6-phosphate. Its pathway is carbohydrate biosynthesis; gluconeogenesis. It functions in the pathway carbohydrate degradation; glycolysis; D-glyceraldehyde 3-phosphate and glycerone phosphate from D-glucose: step 2/4. In terms of biological role, catalyzes the reversible isomerization of glucose-6-phosphate to fructose-6-phosphate. This Streptococcus pneumoniae serotype 19F (strain G54) protein is Glucose-6-phosphate isomerase.